Consider the following 683-residue polypeptide: Translation initiation factor IF-2 (683 aa).

The 170-residue stretch at 182–351 (KRPPVVTVMG…ILTAEMEELK (170 aa)) folds into the tr-type G domain. The G1 stretch occupies residues 191 to 198 (GHVDHGKT). 191–198 (GHVDHGKT) contributes to the GTP binding site. A G2 region spans residues 216–220 (GITQH). Residues 237–240 (DTPG) are G3. Residues 237-241 (DTPGH) and 291-294 (NKID) contribute to the GTP site. The G4 stretch occupies residues 291–294 (NKID). Residues 327-329 (SAH) form a G5 region.

This sequence belongs to the TRAFAC class translation factor GTPase superfamily. Classic translation factor GTPase family. IF-2 subfamily.

It is found in the cytoplasm. In terms of biological role, one of the essential components for the initiation of protein synthesis. Protects formylmethionyl-tRNA from spontaneous hydrolysis and promotes its binding to the 30S ribosomal subunits. Also involved in the hydrolysis of GTP during the formation of the 70S ribosomal complex. The sequence is that of Translation initiation factor IF-2 from Clostridium novyi (strain NT).